The following is a 513-amino-acid chain: ATP synthase subunit alpha (513 aa).

Residue 169–176 (GDRQTGKT) participates in ATP binding.

The protein belongs to the ATPase alpha/beta chains family. As to quaternary structure, F-type ATPases have 2 components, CF(1) - the catalytic core - and CF(0) - the membrane proton channel. CF(1) has five subunits: alpha(3), beta(3), gamma(1), delta(1), epsilon(1). CF(0) has three main subunits: a(1), b(2) and c(9-12). The alpha and beta chains form an alternating ring which encloses part of the gamma chain. CF(1) is attached to CF(0) by a central stalk formed by the gamma and epsilon chains, while a peripheral stalk is formed by the delta and b chains.

The protein resides in the cell inner membrane. The enzyme catalyses ATP + H2O + 4 H(+)(in) = ADP + phosphate + 5 H(+)(out). Produces ATP from ADP in the presence of a proton gradient across the membrane. The alpha chain is a regulatory subunit. The sequence is that of ATP synthase subunit alpha from Polynucleobacter necessarius subsp. necessarius (strain STIR1).